The chain runs to 301 residues: Homoserine O-acetyltransferase (301 aa).

Catalysis depends on Cys-142, which acts as the Acyl-thioester intermediate. Substrate is bound by residues Lys-163 and Ser-192. The active-site Proton acceptor is the His-235. Residue Glu-237 is part of the active site. Substrate is bound at residue Arg-249.

The protein belongs to the MetA family.

The protein localises to the cytoplasm. It carries out the reaction L-homoserine + acetyl-CoA = O-acetyl-L-homoserine + CoA. The protein operates within amino-acid biosynthesis; L-methionine biosynthesis via de novo pathway; O-acetyl-L-homoserine from L-homoserine: step 1/1. In terms of biological role, transfers an acetyl group from acetyl-CoA to L-homoserine, forming acetyl-L-homoserine. The protein is Homoserine O-acetyltransferase of Bacillus cereus (strain 03BB102).